The following is an 81-amino-acid chain: Small ribosomal subunit protein bS18 (81 aa).

The protein belongs to the bacterial ribosomal protein bS18 family. In terms of assembly, part of the 30S ribosomal subunit. Forms a tight heterodimer with protein bS6.

Its function is as follows. Binds as a heterodimer with protein bS6 to the central domain of the 16S rRNA, where it helps stabilize the platform of the 30S subunit. This is Small ribosomal subunit protein bS18 from Chlamydia muridarum (strain MoPn / Nigg).